Consider the following 366-residue polypeptide: Mitogen-activated protein kinase CPK1 (366 aa).

A Protein kinase domain is found at 17–302 (KLEEIVGEGA…SPSKRITVEE (286 aa)). ATP-binding positions include 22–30 (VGEGAYGLV) and K45. Residue D140 is the Proton acceptor of the active site. A Phosphothreonine modification is found at T181. The TXY motif lies at 181–183 (TEY). Y183 carries the phosphotyrosine modification.

This sequence belongs to the protein kinase superfamily. CMGC Ser/Thr protein kinase family. MAP kinase subfamily. Requires Mg(2+) as cofactor. In terms of processing, dually phosphorylated on Thr-181 and Tyr-183, which activates the enzyme.

It catalyses the reaction L-seryl-[protein] + ATP = O-phospho-L-seryl-[protein] + ADP + H(+). The catalysed reaction is L-threonyl-[protein] + ATP = O-phospho-L-threonyl-[protein] + ADP + H(+). Its activity is regulated as follows. Activated by tyrosine and threonine phosphorylation. Functionally, responds to activation by environmental stress by phosphorylating downstream targets. This chain is Mitogen-activated protein kinase CPK1 (CPK1), found in Cryptococcus neoformans var. neoformans serotype D (strain B-3501A) (Filobasidiella neoformans).